The following is a 358-amino-acid chain: Probable dual-specificity RNA methyltransferase RlmN 2 (358 aa).

The active-site Proton acceptor is Glu90. The region spanning 96 to 328 (SGIRRTVCVS…VNTCRYTKGD (233 aa)) is the Radical SAM core domain. A disulfide bridge links Cys103 with Cys334. Cys110, Cys114, and Cys117 together coordinate [4Fe-4S] cluster. Residues 160-161 (GE), Ser192, 215-217 (SLH), and Asn291 each bind S-adenosyl-L-methionine. Catalysis depends on Cys334, which acts as the S-methylcysteine intermediate.

The protein belongs to the radical SAM superfamily. RlmN family. [4Fe-4S] cluster is required as a cofactor.

It is found in the cytoplasm. It carries out the reaction adenosine(2503) in 23S rRNA + 2 reduced [2Fe-2S]-[ferredoxin] + 2 S-adenosyl-L-methionine = 2-methyladenosine(2503) in 23S rRNA + 5'-deoxyadenosine + L-methionine + 2 oxidized [2Fe-2S]-[ferredoxin] + S-adenosyl-L-homocysteine. The enzyme catalyses adenosine(37) in tRNA + 2 reduced [2Fe-2S]-[ferredoxin] + 2 S-adenosyl-L-methionine = 2-methyladenosine(37) in tRNA + 5'-deoxyadenosine + L-methionine + 2 oxidized [2Fe-2S]-[ferredoxin] + S-adenosyl-L-homocysteine. Functionally, specifically methylates position 2 of adenine 2503 in 23S rRNA and position 2 of adenine 37 in tRNAs. The protein is Probable dual-specificity RNA methyltransferase RlmN 2 of Protochlamydia amoebophila (strain UWE25).